Consider the following 676-residue polypeptide: Transcription factor RLM1 (676 aa).

The MADS-box domain maps to 3–57; that stretch reads RRKIEIQRISDDRNRAVTFIKRKAGLFKKAHELSVLCQVDIAVIILGSNNTFYEF. Residues 58–87 constitute a DNA-binding region (mef2-type); it reads SSVDTNDLIYHYQNDKNLLHEVKDPSDYGD. The span at 103–120 shows a compositional bias: polar residues; that stretch reads SSMSNKPSKSNVKGMNQS. Residues 103-156 are disordered; the sequence is SSMSNKPSKSNVKGMNQSENDDDENNDEDDDDHGNFERNSNMHSNKKASDKNIP. At Ser120 the chain carries Phosphoserine. The span at 121-134 shows a compositional bias: acidic residues; sequence ENDDDENNDEDDDD. Residue Ser164 is modified to Phosphoserine. Basic and acidic residues predominate over residues 173–183; sequence DGSEQNKRHPE. Disordered regions lie at residues 173 to 192, 202 to 318, 330 to 424, 472 to 514, and 532 to 631; these read DGSE…LQHL, ISRT…RRKL, NNNF…PFGS, KKQS…VHDL, and MGPN…NSST. Over residues 260–276 the composition is skewed to polar residues; the sequence is ISPNKFSKPFTNASSRT. Positions 284–295 are enriched in low complexity; that stretch reads NNSGSNNNDNSN. Residues 296–312 show a composition bias toward polar residues; sequence YTQSPSNSLEDSIQQTV. Low complexity-rich tracts occupy residues 334–359, 368–381, and 399–417; these read SSNS…MGSS, SRSS…ASAS, and PNAN…NNNN. Phosphoserine occurs at positions 374 and 377. Over residues 472–506 the composition is skewed to polar residues; that stretch reads KKQSQTVPLTTTLTGRPPSTFSGPETSNGPPTGSL. Residues 539–604 are compositionally biased toward low complexity; sequence PGNTNNPGTF…NSNNSYYSNN (66 aa). Positions 621–631 are enriched in polar residues; that stretch reads GDSNNQSNSST.

Belongs to the MEF2 family. As to quaternary structure, can heterodimerize with SPM1. Interacts with KDX1 and SLT2. Post-translationally, phosphorylated by SLT2.

The protein localises to the nucleus. In terms of biological role, may function as a transcription factor downstream of MPK1 that is subject to activation by the MPK1 mitogen-activated protein kinase pathway. Binds to the DNA sequence 5'-CTA[TA](4)TAG-3'. At least some RML1 target genes are involved in cell wall biosynthesis. This Saccharomyces cerevisiae (strain ATCC 204508 / S288c) (Baker's yeast) protein is Transcription factor RLM1 (RLM1).